Here is a 505-residue protein sequence, read N- to C-terminus: MIQIDFRKKINWHRRYRSPQGVKTEHEILRIFESDRGRIINSPAIRRLQQKTQVFPLERNAAVRTRLTHSLEVQQVGRYIAKEILSRLKEQDLLKTYGLDELTGPFESIVEMSCLMHDIGNPPFGHFGEAAINDWFRQRLFPADAESQPLSDDRCIVALLRLREGEETLNELRRKVRQDLCHFEGNAQGIRLVHTLMRMNLTWAQVGGILKYTRPAWWRGQPPATHHYLMKKPGYYLSEEPYIARLRKELNLALYSRFPLTWIMEAADDISYCVADLEDAVEKNIFSVEQLYHHLHEAWGEHEKGSLFAQVVENAWEKSHVNSLSRSTEDQFFMYLRVNTLNKLVPHAAQRFIDNLAEIFEGTFNHALLEDNSSYSRLLELYKNVAQKHVFSHPEVEQLELQGYRVISGLLEIYRPLLSLPLSDFAELVEKERLKRFPIESRLFQKLSTRHRLAYVEAVGKLSSDSPEYPILEYYYRCRLLQDYISGMTDLYAWDEYRRLMAVEQ.

In terms of domain architecture, HD spans 66–273; the sequence is RLTHSLEVQQ…MEAADDISYC (208 aa).

Belongs to the dGTPase family. Type 1 subfamily. As to quaternary structure, homotetramer. Mg(2+) serves as cofactor.

It catalyses the reaction dGTP + H2O = 2'-deoxyguanosine + triphosphate + H(+). In terms of biological role, dGTPase preferentially hydrolyzes dGTP over the other canonical NTPs. This chain is Deoxyguanosinetriphosphate triphosphohydrolase, found in Escherichia fergusonii (strain ATCC 35469 / DSM 13698 / CCUG 18766 / IAM 14443 / JCM 21226 / LMG 7866 / NBRC 102419 / NCTC 12128 / CDC 0568-73).